A 201-amino-acid polypeptide reads, in one-letter code: Putative amino-acid transporter Mb0498 (201 aa).

5 helical membrane-spanning segments follow: residues 25 to 45 (VLVIVALCGIADGALIAAGVG), 57 to 77 (MTLVARFGGAAFLIGYALLAA), 104 to 124 (LVVTFLNPHVYLDTVVLIGAL), 133 to 153 (WFFGAGAWAASVVWFAVLGFS), and 169 to 189 (ILDALVAVTMIGVAVVVLVTS).

It belongs to the LysE/ArgO transporter (TC 2.A.75) family.

It localises to the cell membrane. The chain is Putative amino-acid transporter Mb0498 from Mycobacterium bovis (strain ATCC BAA-935 / AF2122/97).